The primary structure comprises 525 residues: Light-independent protochlorophyllide reductase subunit B (525 aa).

Asp-36 is a binding site for [4Fe-4S] cluster. The active-site Proton donor is the Asp-274. 409-410 (GL) serves as a coordination point for substrate. Residues 433–464 (HGGKAVAREESPVAPADLAPAATSDTPAAPSP) form a disordered region. The span at 444–464 (PVAPADLAPAATSDTPAAPSP) shows a compositional bias: low complexity.

The protein belongs to the ChlB/BchB/BchZ family. In terms of assembly, protochlorophyllide reductase is composed of three subunits; BchL, BchN and BchB. Forms a heterotetramer of two BchB and two BchN subunits. [4Fe-4S] cluster serves as cofactor.

It catalyses the reaction chlorophyllide a + oxidized 2[4Fe-4S]-[ferredoxin] + 2 ADP + 2 phosphate = protochlorophyllide a + reduced 2[4Fe-4S]-[ferredoxin] + 2 ATP + 2 H2O. It functions in the pathway porphyrin-containing compound metabolism; bacteriochlorophyll biosynthesis (light-independent). Its function is as follows. Component of the dark-operative protochlorophyllide reductase (DPOR) that uses Mg-ATP and reduced ferredoxin to reduce ring D of protochlorophyllide (Pchlide) to form chlorophyllide a (Chlide). This reaction is light-independent. The NB-protein (BchN-BchB) is the catalytic component of the complex. This chain is Light-independent protochlorophyllide reductase subunit B, found in Rhodobacter capsulatus (strain ATCC BAA-309 / NBRC 16581 / SB1003).